A 311-amino-acid polypeptide reads, in one-letter code: Putative dihydroorotate dehydrogenase A (fumarate) (311 aa).

Residues K45, 69–73 (NSMGL), and N128 each bind substrate. 45–46 (KT) contacts FMN. N128 is a binding site for FMN. C131 (nucleophile) is an active-site residue. FMN is bound by residues K165 and V193. A substrate-binding site is contributed by 194–195 (NS). Residues G220, 248–249 (GG), and 270–271 (GT) each bind FMN.

It belongs to the dihydroorotate dehydrogenase family. Type 1 subfamily. Homodimer. Requires FMN as cofactor.

The protein localises to the cytoplasm. The enzyme catalyses (S)-dihydroorotate + fumarate = orotate + succinate. It participates in pyrimidine metabolism; UMP biosynthesis via de novo pathway. Functionally, catalyzes the conversion of dihydroorotate to orotate with fumarate as the electron acceptor. This chain is Putative dihydroorotate dehydrogenase A (fumarate) (pyrD), found in Streptococcus uberis (strain ATCC BAA-854 / 0140J).